Reading from the N-terminus, the 74-residue chain is Protein SlyX homolog (74 aa).

Residues 54-74 (QDRNPDAQEPYSLRDEIPPHY) are disordered.

The protein belongs to the SlyX family.

In Neisseria gonorrhoeae (strain ATCC 700825 / FA 1090), this protein is Protein SlyX homolog.